Here is a 624-residue protein sequence, read N- to C-terminus: Phosphoenolpyruvate carboxykinase (ATP) 1 (624 aa).

Residues 1–22 form a disordered region; that stretch reads MASPNGGVTTYDYDDSDSAAPV. 322–329 lines the ATP pocket; it reads GLSGTGKT.

It belongs to the phosphoenolpyruvate carboxykinase (ATP) family. In terms of assembly, homohexamer. In terms of tissue distribution, green leaves but not in roots or etiolated shoots.

It is found in the cytoplasm. The enzyme catalyses oxaloacetate + ATP = phosphoenolpyruvate + ADP + CO2. It functions in the pathway carbohydrate biosynthesis; gluconeogenesis. This chain is Phosphoenolpyruvate carboxykinase (ATP) 1 (PCK1), found in Urochloa panicoides (Panic liverseed grass).